The following is a 440-amino-acid chain: Probable pectate lyase 10 (440 aa).

The first 28 residues, 1–28 (MVIFSRSFLALSTTLIILALCINSSTMA), serve as a signal peptide directing secretion. The tract at residues 32-56 (EDLNSHSSSNSSTANKLPNDDGAWN) is disordered. N-linked (GlcNAc...) asparagine glycans are attached at residues Asn41 and Asn76. Positions 238, 262, and 266 each coordinate Ca(2+). The active site involves Arg318.

This sequence belongs to the polysaccharide lyase 1 family. The cofactor is Ca(2+).

The catalysed reaction is Eliminative cleavage of (1-&gt;4)-alpha-D-galacturonan to give oligosaccharides with 4-deoxy-alpha-D-galact-4-enuronosyl groups at their non-reducing ends.. The protein operates within glycan metabolism; pectin degradation; 2-dehydro-3-deoxy-D-gluconate from pectin: step 2/5. The polypeptide is Probable pectate lyase 10 (Arabidopsis thaliana (Mouse-ear cress)).